A 1482-amino-acid polypeptide reads, in one-letter code: Cystic fibrosis transmembrane conductance regulator (1482 aa).

The Cytoplasmic portion of the chain corresponds to 1-77; that stretch reads MQRSPLEKAS…KLINALRRCF (77 aa). Residues 78-98 traverse the membrane as a helical segment; the sequence is FWRFTFYGIILYLGEVTKAVQ. One can recognise an ABC transmembrane type-1 1 domain in the interval 81–365; that stretch reads FTFYGIILYL…WAVQTWYDSL (285 aa). At 99-122 the chain is on the extracellular side; it reads PLLLGRIIASYDPDNKVERSIAIY. The helical transmembrane segment at 123 to 146 threads the bilayer; it reads LAVGLCLLFVVRTLLLHPAIFGLH. Topologically, residues 147–195 are cytoplasmic; sequence HIGMQMRIAMFSLIYKKTLKLSSRVLDKISIGQLVSLLSNNLNKFDEGL. A helical transmembrane segment spans residues 196–216; that stretch reads ALAHFVWIAPLQVTLLMGLLW. Residues 217–222 lie on the Extracellular side of the membrane; sequence DLLQAS. The chain crosses the membrane as a helical span at residues 223 to 243; the sequence is AFSGLGVLIILACFQAGFGRM. At 244-298 the chain is on the cytoplasmic side; the sequence is MMKYRDQRAGKINERLVITSEMIENIQSVKAYCWEEALEKMIENFRQSELRLTRK. Residues 299–319 form a helical membrane-spanning segment; that stretch reads AAYVRYFNSSAFFFSGFFVVF. The Extracellular segment spans residues 320–339; it reads LSVLPYALIKGIILRKIFTT. Residues 340-358 form a helical membrane-spanning segment; sequence ISFCIVLRMAVTRQFPWAV. Residues 359-859 lie on the Cytoplasmic side of the membrane; that stretch reads QTWYDSLGAI…YLRYITVHKR (501 aa). ATP is bound by residues W401, S434, 458–465, and Q493; that span reads GSTGAGKT. The 224-residue stretch at 423 to 646 folds into the ABC transporter 1 domain; it reads NVDNSLFFSN…RPDFSSKLMG (224 aa). C524 carries the S-palmitoyl cysteine lipid modification. 2 positions are modified to phosphoserine: S549 and S660. Residues 654-832 form a disordered R region region; it reads SAERRNSIIT…EEINEEDLKE (179 aa). S670 carries the post-translational modification Phosphoserine; by PKA. S686 carries the phosphoserine modification. K688 participates in a covalent cross-link: Glycyl lysine isopeptide (Lys-Gly) (interchain with G-Cter in ubiquitin). Residues S700 and S712 each carry the phosphoserine modification. A Phosphothreonine modification is found at T717. Phosphoserine occurs at positions 737, 768, 796, and 814. Residues 860–880 form a helical membrane-spanning segment; it reads LIFVLIWCFVVFLIEVAASLV. The ABC transmembrane type-1 2 domain maps to 860 to 1156; it reads LIFVLIWCFV…AVNSSIDVDS (297 aa). Residues 881–919 lie on the Extracellular side of the membrane; that stretch reads LLCLLSKVSPEDKGNTTKSANDSSAVIITSTSSFYFLYI. N-linked (GlcNAc...) asparagine glycans are attached at residues N895 and N901. Residues 920–940 form a discontinuously helical membrane-spanning segment; the sequence is YVGVADTFLALGLFRGLPLVH. Over 941–991 the chain is Cytoplasmic; the sequence is TLITVSKILHHKMLHSVLQAPMSTLNTLKAGGILNRFSKDIAILDDLLPLT. A helical membrane pass occupies residues 992-1012; that stretch reads IFDFIQLLLIVIGAVAVVSIL. Topologically, residues 1013 to 1014 are extracellular; it reads KP. The helical transmembrane segment at 1015-1035 threads the bilayer; sequence YIFLATVPVIVAFVLLRAYFL. The Cytoplasmic segment spans residues 1036–1096; sequence HTSQQLKQLE…TANWFLYLST (61 aa). The helical transmembrane segment at 1097–1117 threads the bilayer; that stretch reads LRWFQMRIEMIFVIFFIAVTF. The Extracellular portion of the chain corresponds to 1118–1131; sequence ISILTTGEGEGTVG. A helical membrane pass occupies residues 1132–1152; the sequence is IILTLAMNIMSTLQWAVNSSI. At 1153 to 1482 the chain is on the cytoplasmic side; sequence DVDSLMRSVS…TEEEVQDTRL (330 aa). An ABC transporter 2 domain is found at 1212 to 1445; it reads MTVKDLTAKY…KSLFRQAISP (234 aa). Residues Y1221 and 1246–1253 contribute to the ATP site; that span reads GRTGSGKS. Residues 1388-1482 form an interaction with GORASP2 region; it reads RTLKQAFADC…TEEEVQDTRL (95 aa). C1397 carries the S-palmitoyl cysteine lipid modification. Phosphoserine is present on S1446. The segment at 1450–1482 is disordered; that stretch reads KLFPHQNSGKHKSRSKITALKEETEEEVQDTRL. Positions 1472 to 1482 are enriched in acidic residues; the sequence is ETEEEVQDTRL. A PDZ-binding motif is present at residues 1480-1482; the sequence is TRL.

This sequence belongs to the ABC transporter superfamily. ABCC family. CFTR transporter (TC 3.A.1.202) subfamily. As to quaternary structure, monomer; does not require oligomerization for channel activity. May form oligomers in the membrane. Interacts with SLC26A3, SLC26A6 and NHERF1. Interacts with SHANK2. Interacts with MYO6. Interacts (via C-terminus) with GOPC (via PDZ domain); this promotes CFTR internalization and thereby decreases channel activity. Interacts with SLC4A7 through NHERF1. Found in a complex with MYO5B and RAB11A. Interacts with ANO1. Interacts with SLC26A8. Interacts with AHCYL1; the interaction increases CFTR activity. Interacts with CSE1L. The core-glycosylated form interacts with GORASP2 (via PDZ GRASP-type 1 domain) in respone to ER stress. Interacts with MARCHF2; the interaction leads to CFTR ubiqtuitination and degradation. Interacts with ADGRG2. In terms of processing, N-glycosylated. Post-translationally, phosphorylated; cAMP treatment promotes phosphorylation and activates the channel. Dephosphorylation decreases the ATPase activity (in vitro). Phosphorylation at PKA sites activates the channel. Phosphorylation at PKC sites enhances the response to phosphorylation by PKA. Phosphorylated by AMPK; this inhibits channel activity. Ubiquitinated, leading to its degradation in the lysosome. Deubiquitination by USP10 in early endosomes enhances its endocytic recycling to the cell membrane. Ubiquitinated by RNF185 during ER stress. Ubiquitinated by MARCHF2.

The protein localises to the apical cell membrane. It localises to the early endosome membrane. The protein resides in the cell membrane. It is found in the recycling endosome membrane. Its subcellular location is the endoplasmic reticulum membrane. The protein localises to the nucleus. It catalyses the reaction ATP + H2O + closed Cl(-) channel = ADP + phosphate + open Cl(-) channel.. It carries out the reaction chloride(in) = chloride(out). The catalysed reaction is hydrogencarbonate(in) = hydrogencarbonate(out). The enzyme catalyses ATP + H2O = ADP + phosphate + H(+). In terms of biological role, epithelial ion channel that plays an important role in the regulation of epithelial ion and water transport and fluid homeostasis. Mediates the transport of chloride ions across the cell membrane. Possesses an intrinsic ATPase activity and utilizes ATP to gate its channel; the passive flow of anions through the channel is gated by cycles of ATP binding and hydrolysis by the ATP-binding domains. The ion channel is also permeable to HCO(3)(-); selectivity depends on the extracellular chloride concentration. Exerts its function also by modulating the activity of other ion channels and transporters. Contributes to the regulation of the pH and the ion content of the epithelial fluid layer. Modulates the activity of the epithelial sodium channel (ENaC) complex, in part by regulating the cell surface expression of the ENaC complex. May regulate bicarbonate secretion and salvage in epithelial cells by regulating the transporter SLC4A7. Can inhibit the chloride channel activity of ANO1. Plays a role in the chloride and bicarbonate homeostasis during sperm epididymal maturation and capacitation. This Dasypus novemcinctus (Nine-banded armadillo) protein is Cystic fibrosis transmembrane conductance regulator.